The chain runs to 156 residues: Large ribosomal subunit protein eL24 (156 aa).

The segment at 87–156 (LELIKERRSQ…AFQKVHATSR (70 aa)) is disordered. The span at 89–129 (LIKERRSQKPSDRKAARDVKLAKDKEAKKADKAARKAEKAK) shows a compositional bias: basic and acidic residues. Over residues 130–147 (SAAAGAQSKVSKQQSKGA) the composition is skewed to low complexity.

The protein belongs to the eukaryotic ribosomal protein eL24 family.

The sequence is that of Large ribosomal subunit protein eL24 (RPL24) from Debaryomyces hansenii (strain ATCC 36239 / CBS 767 / BCRC 21394 / JCM 1990 / NBRC 0083 / IGC 2968) (Yeast).